We begin with the raw amino-acid sequence, 224 residues long: Cerebellin-2 (224 aa).

The signal sequence occupies residues 1–51 (MQAPGRGPLGLRLMMPGRRGALREPGGCGSCLGVALALLLLLLPACCPVRA). N-linked (GlcNAc...) asparagine glycosylation is found at Asn-53 and Asn-110. The C1q domain occupies 88–224 (SGSAKVAFSA…TFSGFLVFPL (137 aa)).

Homohexamer; disulfide-linked homotrimers. The trimers are assembled via the globular C1q domains. The trimers associate via N-terminal cysteine residues to form disulfide-linked hexamers. May form homooligomers or heterooligomers with CBLN1 and CBLN3 prior to secretion. Once secreted, does not interact with other CBLN family members. Interacts with GRID2, and more weakly with GRID1. Interacts with NRXN1 and NRXN2 long and short isoforms produced by alternative promoter usage. Weakly interacts with NRXN3 short isoform and not at all with NRXN3 long isoform.

The protein resides in the secreted. Functionally, acts as a synaptic organizer in specific subsets of neurons in the brain. Essential for long-term maintenance but not establishment of excitatory synapses. Functions as part of a trans-synaptic complex by binding to postsynaptic GRID1 and presynaptic neurexins. This interaction helps regulate the activity of NMDA and AMPA receptors at hippocampal synapses without affecting synapse formation. NRXN1B-CBLN2-GRID1 complex transduce presynaptic signals into postsynaptic NMDAR response. NRXN3B-CBLN2-GRID1 complex transduce presynaptic signals into postsynaptic AMPAR response. This Homo sapiens (Human) protein is Cerebellin-2.